A 193-amino-acid polypeptide reads, in one-letter code: Ion-translocating oxidoreductase complex subunit A (193 aa).

6 helical membrane-spanning segments follow: residues 5-25 (LLLL…FLGL), 39-59 (VGMG…SYLM), 63-83 (ILIP…VIAV), 102-122 (LLGI…VALL), 134-154 (IIYG…FAAM), and 171-191 (SIAM…TGLI).

The protein belongs to the NqrDE/RnfAE family. As to quaternary structure, the complex is composed of six subunits: RnfA, RnfB, RnfC, RnfD, RnfE and RnfG.

Its subcellular location is the cell inner membrane. In terms of biological role, part of a membrane-bound complex that couples electron transfer with translocation of ions across the membrane. This chain is Ion-translocating oxidoreductase complex subunit A, found in Aeromonas salmonicida (strain A449).